The primary structure comprises 993 residues: Type II inositol 1,4,5-trisphosphate 5-phosphatase (993 aa).

The PH domain occupies 22 to 148; the sequence is QGVLCKGDSR…PEFEWLSRHT (127 aa). Composition is skewed to basic and acidic residues over residues 149-163 and 294-303; these read CAEP…REWN and SKSDMSEKVR. Disordered regions lie at residues 149 to 191 and 236 to 304; these read CAEP…GLED and EALE…KVRS. Positions 342 to 668 are 5-phosphatase; that stretch reads IQNFRFFVGT…LDKMENANIP (327 aa). Mg(2+)-binding residues include Asn355 and Glu383. Substrate-binding positions include Glu383, 459–460, 582–583, and 596–598; these read NK, YK, and KCR. Positions 669-782 are ASH; sequence SVTLSKREFC…LSVSGNYLPS (114 aa). Residues 821-993 enclose the Rho-GAP domain; that stretch reads SQLENPMEIP…FIHQFLCGPL (173 aa). Position 990 is a cysteine methyl ester (Cys990). The S-farnesyl cysteine moiety is linked to residue Cys990. Positions 991–993 are cleaved as a propeptide — removed in mature form; sequence GPL.

It belongs to the inositol 1,4,5-trisphosphate 5-phosphatase type II family. In terms of assembly, interacts with APPL1, PHETA1 and PHETA2. Interacts with several Rab GTPases, at least RAB1A, RAB2A, RAB5A, RAB6A, RAB8A, RAB9A and RAB33B; these interactions may play a dual role in targeting INPP5B to the specific membranes and stimulating its phosphatase activity. Interacts preferentially with non-phosphorylated RAB8A; phosphorylation of RAB8A on 'Thr-72' disrupts this interaction. Interacts with INPP5F. Post-translationally, isoprenylation at Cys-990 may be required for localization at the membrane. May be proteolytically cleaved after Lys-320 as inferred from N-terminal protein sequence of the 75 kda form. As to expression, detected in kidney, liver, brain, lung and testis (at protein level). Detected in kidney and liver, and at lower levels in brain, lung and testis.

The protein localises to the cytoplasm. It localises to the cytosol. It is found in the endoplasmic reticulum-Golgi intermediate compartment. Its subcellular location is the early endosome membrane. The protein resides in the membrane. The protein localises to the cytoplasmic vesicle. It localises to the phagosome membrane. It carries out the reaction a 1,2-diacyl-sn-glycero-3-phospho-(1D-myo-inositol-4,5-bisphosphate) + H2O = a 1,2-diacyl-sn-glycero-3-phospho-(1D-myo-inositol 4-phosphate) + phosphate. In terms of biological role, hydrolyzes phosphatidylinositol 4,5-bisphosphate (PtIns(4,5)P2) and the signaling molecule phosphatidylinositol 1,4,5-trisphosphate (PtIns(1,4,5)P3), and thereby modulates cellular signaling events. This is Type II inositol 1,4,5-trisphosphate 5-phosphatase (Inpp5b) from Mus musculus (Mouse).